The primary structure comprises 230 residues: Probable septum site-determining protein MinC (230 aa).

Belongs to the MinC family. In terms of assembly, interacts with MinD and FtsZ.

Its function is as follows. Cell division inhibitor that blocks the formation of polar Z ring septums. Rapidly oscillates between the poles of the cell to destabilize FtsZ filaments that have formed before they mature into polar Z rings. Prevents FtsZ polymerization. The protein is Probable septum site-determining protein MinC of Cronobacter sakazakii (strain ATCC BAA-894) (Enterobacter sakazakii).